Consider the following 224-residue polypeptide: Ras-related protein Rab-32C (224 aa).

Residues 1–22 (MYSNKNDKDKDKDQNNENNKNN) form a disordered region. 35 to 42 (GKLACGKT) is a GTP binding site. The short motif at 57 to 65 (YKPTIGVDF) is the Effector region element. GTP is bound by residues 83 to 87 (DIAGQ) and 142 to 145 (NKCD). The disordered stretch occupies residues 203–224 (GFKLSDQSQSTETTPTQSKTCC). Residues 209–224 (QSQSTETTPTQSKTCC) show a composition bias toward low complexity. Residues cysteine 223 and cysteine 224 are each lipidated (S-geranylgeranyl cysteine).

It belongs to the small GTPase superfamily. Rab family.

In Dictyostelium discoideum (Social amoeba), this protein is Ras-related protein Rab-32C (rab32C).